The sequence spans 415 residues: Fructose-like permease IIC component (415 aa).

Residues Met-1 to Met-46 lie on the Cytoplasmic side of the membrane. Residues Leu-35–Leu-415 form the PTS EIIC type-2 domain. The chain crosses the membrane as a helical span at residues Val-47 to Trp-67. Residues Leu-68–Ser-101 are Periplasmic-facing. Residues Phe-102 to Ile-122 form a helical membrane-spanning segment. Topologically, residues Gly-123–Leu-126 are cytoplasmic. A helical transmembrane segment spans residues Ala-127–Phe-147. The Periplasmic portion of the chain corresponds to Asp-148–Ser-157. A helical membrane pass occupies residues Ser-158 to Val-178. Topologically, residues Lys-179–Thr-197 are cytoplasmic. The chain crosses the membrane as a helical span at residues Phe-198–Pro-218. Residues Phe-219–Lys-237 are Periplasmic-facing. The helical transmembrane segment at Gly-238–Ile-258 threads the bilayer. Residues Asn-259–Pro-276 lie on the Cytoplasmic side of the membrane. A helical membrane pass occupies residues Val-277–Ile-297. Topologically, residues Asp-298–Ala-318 are periplasmic. A helical membrane pass occupies residues Met-319–Ile-339. Topologically, residues Thr-340–Ala-341 are cytoplasmic. A helical transmembrane segment spans residues Ile-342–Val-362. The Periplasmic segment spans residues Gln-363–Asn-378. A helical transmembrane segment spans residues Leu-379–Phe-399. Topologically, residues Leu-400–Leu-415 are cytoplasmic.

Its subcellular location is the cell inner membrane. The phosphoenolpyruvate-dependent sugar phosphotransferase system (PTS), a major carbohydrate active -transport system, catalyzes the phosphorylation of incoming sugar substrates concomitant with their translocation across the cell membrane. In Escherichia coli O6:H1 (strain CFT073 / ATCC 700928 / UPEC), this protein is Fructose-like permease IIC component (fryC).